Reading from the N-terminus, the 337-residue chain is Holliday junction branch migration complex subunit RuvB (337 aa).

Residues 4–186 are large ATPase domain (RuvB-L); sequence ADRLIHPQII…FGIPLRLEFY (183 aa). ATP-binding positions include R26, G67, K70, T71, T72, 133-135, R176, Y186, and R223; that span reads EDY. Residue T71 coordinates Mg(2+). Positions 187–257 are small ATPAse domain (RuvB-S); sequence NVKDLSSIVA…IAEAALDMLD (71 aa). The segment at 260 to 337 is head domain (RuvB-H); sequence AEGFDYMDRK…NHFNIIKPDA (78 aa). Positions 296, 315, and 320 each coordinate DNA.

This sequence belongs to the RuvB family. As to quaternary structure, homohexamer. Forms an RuvA(8)-RuvB(12)-Holliday junction (HJ) complex. HJ DNA is sandwiched between 2 RuvA tetramers; dsDNA enters through RuvA and exits via RuvB. An RuvB hexamer assembles on each DNA strand where it exits the tetramer. Each RuvB hexamer is contacted by two RuvA subunits (via domain III) on 2 adjacent RuvB subunits; this complex drives branch migration. In the full resolvosome a probable DNA-RuvA(4)-RuvB(12)-RuvC(2) complex forms which resolves the HJ.

The protein localises to the cytoplasm. It catalyses the reaction ATP + H2O = ADP + phosphate + H(+). In terms of biological role, the RuvA-RuvB-RuvC complex processes Holliday junction (HJ) DNA during genetic recombination and DNA repair, while the RuvA-RuvB complex plays an important role in the rescue of blocked DNA replication forks via replication fork reversal (RFR). RuvA specifically binds to HJ cruciform DNA, conferring on it an open structure. The RuvB hexamer acts as an ATP-dependent pump, pulling dsDNA into and through the RuvAB complex. RuvB forms 2 homohexamers on either side of HJ DNA bound by 1 or 2 RuvA tetramers; 4 subunits per hexamer contact DNA at a time. Coordinated motions by a converter formed by DNA-disengaged RuvB subunits stimulates ATP hydrolysis and nucleotide exchange. Immobilization of the converter enables RuvB to convert the ATP-contained energy into a lever motion, pulling 2 nucleotides of DNA out of the RuvA tetramer per ATP hydrolyzed, thus driving DNA branch migration. The RuvB motors rotate together with the DNA substrate, which together with the progressing nucleotide cycle form the mechanistic basis for DNA recombination by continuous HJ branch migration. Branch migration allows RuvC to scan DNA until it finds its consensus sequence, where it cleaves and resolves cruciform DNA. The sequence is that of Holliday junction branch migration complex subunit RuvB from Shewanella halifaxensis (strain HAW-EB4).